We begin with the raw amino-acid sequence, 541 residues long: Tyrosine-protein kinase Yes (541 aa).

The N-myristoyl glycine moiety is linked to residue Gly-2. Cys-3 carries S-palmitoyl cysteine; in membrane form lipidation. Tyr-32 bears the Phosphotyrosine mark. The 62-residue stretch at 89–150 (GGVTIFVALY…PSNYVVPADS (62 aa)) folds into the SH3 domain. The SH2 domain maps to 156–253 (WYFGKMGRKD…GLCHKLTTVC (98 aa)). The Protein kinase domain maps to 275 to 528 (LRLEVKLGQG…YIQSFLEDYF (254 aa)). ATP-binding positions include 281-289 (LGQGCFGEV) and Lys-303. A phosphotyrosine mark is found at Tyr-334 and Tyr-343. Asp-394 (proton acceptor) is an active-site residue. Tyr-424 is subject to Phosphotyrosine; by autocatalysis. Tyr-535 carries the post-translational modification Phosphotyrosine.

The protein belongs to the protein kinase superfamily. Tyr protein kinase family. SRC subfamily. As to quaternary structure, interacts with YAP1. Interacts with FASLG. Interacts with CTNND1; this interaction allows YES1-mediated activation of FYN and FER and subsequent phosphorylation of CTNND1. Interacts with CSF1R. Interacts with IL6ST/gp130. Interacts with SCRIB, when YES1 is in a closed conformation; the interaction facilitates YES1 autophosphorylation. Post-translationally, phosphorylated. Phosphorylation by CSK on the C-terminal tail maintains the enzyme in an inactive state. Autophosphorylation at Tyr-424 maintains enzyme activity by blocking CSK-mediated inhibition. In terms of processing, palmitoylation at Cys-3 promotes membrane localization.

It localises to the cell membrane. Its subcellular location is the cytoplasm. It is found in the cytoskeleton. The protein localises to the microtubule organizing center. The protein resides in the centrosome. It localises to the cytosol. Its subcellular location is the cell junction. It catalyses the reaction L-tyrosyl-[protein] + ATP = O-phospho-L-tyrosyl-[protein] + ADP + H(+). In terms of biological role, non-receptor protein tyrosine kinase that is involved in the regulation of cell growth and survival, apoptosis, cell-cell adhesion, cytoskeleton remodeling, and differentiation. Stimulation by receptor tyrosine kinases (RTKs) including EGFR, PDGFR, CSF1R and FGFR leads to recruitment of YES1 to the phosphorylated receptor, and activation and phosphorylation of downstream substrates. Upon EGFR activation, promotes the phosphorylation of PARD3 to favor epithelial tight junction assembly. Participates in the phosphorylation of specific junctional components such as CTNND1 by stimulating the FYN and FER tyrosine kinases at cell-cell contacts. Upon T-cell stimulation by CXCL12, phosphorylates collapsin response mediator protein 2/DPYSL2 and induces T-cell migration. Participates in CD95L/FASLG signaling pathway and mediates AKT-mediated cell migration. Plays a role in cell cycle progression by phosphorylating the cyclin dependent kinase 4/CDK4 thus regulating the G1 phase. Also involved in G2/M progression and cytokinesis. Catalyzes phosphorylation of organic cation transporter OCT2 which induces its transport activity. This Mus musculus (Mouse) protein is Tyrosine-protein kinase Yes (Yes1).